The chain runs to 326 residues: Interleukin-1-binding protein (326 aa).

Residues 1–18 (MSIPPVIFLPIFFYSSFV) form the signal peptide. Ig-like C2-type domains are found at residues 24–115 (PECI…LNLT), 122–208 (SNID…YDVT), and 221–322 (PPTM…KTVT). A disulfide bridge connects residues Cys-48 and Cys-99. Residues Asn-80, Asn-103, and Asn-113 are each glycosylated (N-linked (GlcNAc...) asparagine; by host). Cys-143 and Cys-194 are joined by a disulfide. Residue Asn-237 is glycosylated (N-linked (GlcNAc...) asparagine; by host). Cys-242 and Cys-309 are disulfide-bonded.

It belongs to the interleukin-1 receptor family. Interacts with mouse Il1b.

The protein resides in the secreted. May reduce the host inflammatory response by interacting with inteleukin-1 beta (Il1b) and thus decreasing the association between IL1B and its cellular receptor. This is Interleukin-1-binding protein (OPG201) from Bos taurus (Bovine).